The sequence spans 273 residues: NLP effector protein 10 (273 aa).

The first 21 residues, 1 to 21 (MKLPTFLIGFVALLVTSNGSA), serve as a signal peptide directing secretion. Asn-91 carries N-linked (GlcNAc...) asparagine glycosylation. Residues 129–139 (AIMYAWYLPRA) carry the Conserved undecapeptide motif motif. Residues 149-155 (GHRHYWL) carry the Conserved heptapeptide motif motif.

This sequence belongs to the Necrosis inducing protein (NPP1) family.

The protein localises to the secreted. Secreted effector that acts as a pathogen-associated molecular pattern (PAMP) recognized by the plant immune system. Seems not to induce necrosis in Nicotiana benthamiana leaves but significantly improves disease resistance of Arabidopsis thaliana to Hyaloperonospora arabidopsidis and causes an inhibition of plant growth which is typically associated with enhanced immunity when over-expressed in Arabidopsis. The sequence is that of NLP effector protein 10 from Plasmopara viticola (Downy mildew of grapevine).